We begin with the raw amino-acid sequence, 337 residues long: Large ribosomal subunit protein uL3 (337 aa).

Positions M1–S29 are disordered.

Belongs to the universal ribosomal protein uL3 family. Part of the 50S ribosomal subunit. Forms a cluster with proteins L14 and L24e.

Its function is as follows. One of the primary rRNA binding proteins, it binds directly near the 3'-end of the 23S rRNA, where it nucleates assembly of the 50S subunit. This chain is Large ribosomal subunit protein uL3, found in Methanoregula boonei (strain DSM 21154 / JCM 14090 / 6A8).